A 690-amino-acid chain; its full sequence is Elongation factor G (690 aa).

In terms of domain architecture, tr-type G spans 8-283 (EYIRNIGICA…AVVGFLPSPI (276 aa)). Residues 17 to 24 (AHIDAGKT), 81 to 85 (DTPGH), and 135 to 138 (NKMD) contribute to the GTP site.

The protein belongs to the TRAFAC class translation factor GTPase superfamily. Classic translation factor GTPase family. EF-G/EF-2 subfamily.

It is found in the cytoplasm. Its function is as follows. Catalyzes the GTP-dependent ribosomal translocation step during translation elongation. During this step, the ribosome changes from the pre-translocational (PRE) to the post-translocational (POST) state as the newly formed A-site-bound peptidyl-tRNA and P-site-bound deacylated tRNA move to the P and E sites, respectively. Catalyzes the coordinated movement of the two tRNA molecules, the mRNA and conformational changes in the ribosome. This Rickettsia canadensis (strain McKiel) protein is Elongation factor G.